Here is a 152-residue protein sequence, read N- to C-terminus: Troponin C (152 aa).

Residue Thr1 is modified to N-acetylthreonine. EF-hand domains follow at residues 9–44 (KQIL…LGLL), 45–80 (VKDD…KLKE), 82–117 (LDER…LGDE), and 118–152 (LTEE…SSDA). Ca(2+) contacts are provided by Asp131, Asp133, Ser135, Thr137, and Glu142.

This sequence belongs to the troponin C family.

Functionally, troponin is the central regulatory protein of striated muscle contraction. Tn consists of three components: Tn-I which is the inhibitor of actomyosin ATPase, Tn-T which contains the binding site for tropomyosin and Tn-C. The binding of calcium to Tn-C abolishes the inhibitory action of Tn on actin filaments. This Mizuhopecten yessoensis (Japanese scallop) protein is Troponin C.